The chain runs to 239 residues: 1-(5-phosphoribosyl)-5-[(5-phosphoribosylamino)methylideneamino] imidazole-4-carboxamide isomerase (239 aa).

Catalysis depends on Asp8, which acts as the Proton acceptor. Asp129 serves as the catalytic Proton donor.

The protein belongs to the HisA/HisF family.

The protein resides in the cytoplasm. The enzyme catalyses 1-(5-phospho-beta-D-ribosyl)-5-[(5-phospho-beta-D-ribosylamino)methylideneamino]imidazole-4-carboxamide = 5-[(5-phospho-1-deoxy-D-ribulos-1-ylimino)methylamino]-1-(5-phospho-beta-D-ribosyl)imidazole-4-carboxamide. It functions in the pathway amino-acid biosynthesis; L-histidine biosynthesis; L-histidine from 5-phospho-alpha-D-ribose 1-diphosphate: step 4/9. The chain is 1-(5-phosphoribosyl)-5-[(5-phosphoribosylamino)methylideneamino] imidazole-4-carboxamide isomerase from Bacillus thuringiensis subsp. konkukian (strain 97-27).